The sequence spans 320 residues: Malate dehydrogenase (320 aa).

Residues 10 to 15 (GSGMIG) and D34 each bind NAD(+). Residues R83 and R89 each contribute to the substrate site. Residues N96 and 119–121 (ITN) contribute to the NAD(+) site. Residues N121 and R152 each contribute to the substrate site. Catalysis depends on H176, which acts as the Proton acceptor.

It belongs to the LDH/MDH superfamily. MDH type 3 family.

The enzyme catalyses (S)-malate + NAD(+) = oxaloacetate + NADH + H(+). Functionally, catalyzes the reversible oxidation of malate to oxaloacetate. The protein is Malate dehydrogenase of Bartonella henselae (strain ATCC 49882 / DSM 28221 / CCUG 30454 / Houston 1) (Rochalimaea henselae).